The sequence spans 306 residues: tRNA dimethylallyltransferase (306 aa).

ATP is bound at residue 9-16; that stretch reads GPTAIGKT. 11–16 contacts substrate; it reads TAIGKT. Residues 34–37 are interaction with substrate tRNA; the sequence is DSMQ.

It belongs to the IPP transferase family. As to quaternary structure, monomer. Requires Mg(2+) as cofactor.

It carries out the reaction adenosine(37) in tRNA + dimethylallyl diphosphate = N(6)-dimethylallyladenosine(37) in tRNA + diphosphate. Functionally, catalyzes the transfer of a dimethylallyl group onto the adenine at position 37 in tRNAs that read codons beginning with uridine, leading to the formation of N6-(dimethylallyl)adenosine (i(6)A). The sequence is that of tRNA dimethylallyltransferase from Lactobacillus acidophilus (strain ATCC 700396 / NCK56 / N2 / NCFM).